The following is a 146-amino-acid chain: Non-structural protein 5 (146 aa).

A helical transmembrane segment spans residues A36–L56.

It belongs to the aquareoviridae NS5 protein family.

Its subcellular location is the host membrane. The sequence is that of Non-structural protein 5 (S7) from Aquareovirus C (isolate Golden shiner/USA/GSRV/1977) (AQRV-C).